Reading from the N-terminus, the 904-residue chain is Phosphoenolpyruvate carboxylase (904 aa).

The interval 52 to 71 (ISRRESDAPPSTLSEQLTGR) is disordered. Residues His-151 and Lys-570 contribute to the active site.

It belongs to the PEPCase type 1 family. Mg(2+) is required as a cofactor.

The catalysed reaction is oxaloacetate + phosphate = phosphoenolpyruvate + hydrogencarbonate. Its function is as follows. Forms oxaloacetate, a four-carbon dicarboxylic acid source for the tricarboxylic acid cycle. This chain is Phosphoenolpyruvate carboxylase, found in Xanthomonas oryzae pv. oryzae (strain MAFF 311018).